The primary structure comprises 227 residues: uncharacterized protein (227 aa).

The signal sequence occupies residues 1–25; sequence MLIMKKLLLIAATSATMLSSSVSFA.

This sequence to R.conorii RC1281.

This is an uncharacterized protein from Rickettsia conorii (strain ATCC VR-613 / Malish 7).